A 676-amino-acid chain; its full sequence is Exostosin-like 1 (676 aa).

Residues 1–9 (MQSWRRRKS) lie on the Cytoplasmic side of the membrane. Residues 10 to 30 (LWLALSASWLLLVLLGGFSLL) form a helical; Signal-anchor for type II membrane protein membrane-spanning segment. The Lumenal segment spans residues 31 to 676 (RLALPPRPRP…RKKYRSLEKP (646 aa)). A disordered region spans residues 238–264 (TADTGSSACPWDGRCEQDPGPGQTQRQ). Asn269 carries N-linked (GlcNAc...) asparagine glycosylation. Cys584 and Cys634 are joined by a disulfide. The interval 610 to 631 (RQEAAPLAPGGPGPRPKPPAPA) is disordered. Residues 618–631 (PGGPGPRPKPPAPA) are compositionally biased toward pro residues.

Belongs to the glycosyltransferase 47 family.

The protein resides in the endoplasmic reticulum membrane. The enzyme catalyses 3-O-{[(1-&gt;4)-beta-D-GlcA-(1-&gt;4)-alpha-D-GlcNAc](n)-(1-&gt;4)-beta-D-GlcA-(1-&gt;3)-beta-D-Gal-(1-&gt;3)-beta-D-Gal-(1-&gt;4)-beta-D-Xyl}-L-seryl-[protein] + UDP-N-acetyl-alpha-D-glucosamine = 3-O-{alpha-D-GlcNAc-[(1-&gt;4)-beta-D-GlcA-(1-&gt;4)-alpha-D-GlcNAc](n)-(1-&gt;4)-beta-D-GlcA-(1-&gt;3)-beta-D-Gal-(1-&gt;3)-beta-D-Gal-(1-&gt;4)-beta-D-Xyl}-L-seryl-[protein] + UDP + H(+). It functions in the pathway protein modification; protein glycosylation. In terms of biological role, glycosyltransferase required for the biosynthesis of heparan-sulfate (HS). Transfers N-acetyl-alpha-D-glucosamine to the nascent HS chain (GlcNAcT-II activity). Appears to lack GlcNAcT I and GlcAT-II activities. In Homo sapiens (Human), this protein is Exostosin-like 1 (EXTL1).